A 200-amino-acid polypeptide reads, in one-letter code: Dephospho-CoA kinase (200 aa).

Residues 4–200 form the DPCK domain; the sequence is VIGLTGGIAS…AILKKWNIID (197 aa). Residue 12–17 coordinates ATP; that stretch reads ASGKST.

Belongs to the CoaE family.

Its subcellular location is the cytoplasm. The enzyme catalyses 3'-dephospho-CoA + ATP = ADP + CoA + H(+). The protein operates within cofactor biosynthesis; coenzyme A biosynthesis; CoA from (R)-pantothenate: step 5/5. Functionally, catalyzes the phosphorylation of the 3'-hydroxyl group of dephosphocoenzyme A to form coenzyme A. The sequence is that of Dephospho-CoA kinase from Bacillus anthracis.